We begin with the raw amino-acid sequence, 180 residues long: Large ribosomal subunit protein uL6 (180 aa).

The protein belongs to the universal ribosomal protein uL6 family. Part of the 50S ribosomal subunit.

In terms of biological role, this protein binds to the 23S rRNA, and is important in its secondary structure. It is located near the subunit interface in the base of the L7/L12 stalk, and near the tRNA binding site of the peptidyltransferase center. In Desulforapulum autotrophicum (strain ATCC 43914 / DSM 3382 / VKM B-1955 / HRM2) (Desulfobacterium autotrophicum), this protein is Large ribosomal subunit protein uL6.